A 177-amino-acid chain; its full sequence is Putative pre-16S rRNA nuclease (177 aa).

This sequence belongs to the YqgF nuclease family.

The protein localises to the cytoplasm. Could be a nuclease involved in processing of the 5'-end of pre-16S rRNA. In Psychrobacter sp. (strain PRwf-1), this protein is Putative pre-16S rRNA nuclease.